Here is an 86-residue protein sequence, read N- to C-terminus: Small ribosomal subunit protein bS18 (86 aa).

It belongs to the bacterial ribosomal protein bS18 family. As to quaternary structure, part of the 30S ribosomal subunit. Forms a tight heterodimer with protein bS6.

Binds as a heterodimer with protein bS6 to the central domain of the 16S rRNA, where it helps stabilize the platform of the 30S subunit. The protein is Small ribosomal subunit protein bS18 of Campylobacter concisus (strain 13826).